The following is a 428-amino-acid chain: GTPase Obg (428 aa).

One can recognise an Obg domain in the interval methionine 1 to leucine 158. Residues alanine 159–lysine 333 enclose the OBG-type G domain. Residues glycine 165–serine 172, phenylalanine 190–valine 194, aspartate 212–glycine 215, threonine 282–aspartate 285, and serine 314–leucine 316 each bind GTP. 2 residues coordinate Mg(2+): serine 172 and threonine 192. The region spanning tyrosine 350–glutamate 428 is the OCT domain.

The protein belongs to the TRAFAC class OBG-HflX-like GTPase superfamily. OBG GTPase family. In terms of assembly, monomer. It depends on Mg(2+) as a cofactor.

Its subcellular location is the cytoplasm. In terms of biological role, an essential GTPase which binds GTP, GDP and possibly (p)ppGpp with moderate affinity, with high nucleotide exchange rates and a fairly low GTP hydrolysis rate. Plays a role in control of the cell cycle, stress response, ribosome biogenesis and in those bacteria that undergo differentiation, in morphogenesis control. The polypeptide is GTPase Obg (Lacticaseibacillus casei (strain BL23) (Lactobacillus casei)).